We begin with the raw amino-acid sequence, 392 residues long: Mycofactocin maturase MftC (392 aa).

The Radical SAM core domain occupies 18–228 (LDAPICLTWE…YDWLVAKGDR (211 aa)). [4Fe-4S] cluster-binding residues include C32, C36, C39, C253, C260, C271, C312, C315, C321, C325, and C343. The span at 354-367 (KERVKPKPSGDHSR) shows a compositional bias: basic and acidic residues. The segment at 354–377 (KERVKPKPSGDHSRGTKQGPVALK) is disordered.

The protein belongs to the radical SAM superfamily. MftC family. The cofactor is [4Fe-4S] cluster.

It catalyses the reaction [mycofactocin precursor peptide]-C-terminal glycyl-L-valyl-L-tyrosine + S-adenosyl-L-methionine = [mycofactocin precursor peptide]-C-terminal glycyl-N-{[2-(4-hydroxyphenyl)ethenyl]-3-methylbutanamide} + 5'-deoxyadenosine + L-methionine + CO2. The enzyme catalyses [mycofactocin precursor peptide]-C-terminal glycyl-N-{[2-(4-hydroxyphenyl)ethenyl]-3-methylbutanamide} + AH2 + S-adenosyl-L-methionine = [mycofactocin precursor peptide]-C-terminal glycyl-N-{5-[(4-hydroxyphenyl)methyl]-4,4-dimethyl-2-oxopyrrolidin-3-yl}acetamide + 5'-deoxyadenosine + L-methionine + A + H(+). Its function is as follows. Radical S-adenosylmethionine (SAM) enzyme responsible for the first step of the biosynthesis of the enzyme cofactor mycofactocin (MFT). Catalyzes two reactions at the C-terminus of the mycofactocin precursor (the MftA peptide). The first one is the oxidative decarboxylation of the C-terminal L-tyrosine of MftA, forming an unsaturated tyramine moiety. The second reaction is the cross-linking of the tyramine with the penultimate L-valine residue, forming a five-membered lactam ring. Its activity requires the presence of the MftB chaperone. Is required for the in vivo ethanol assimilation in M.smegmatis. This Mycolicibacterium smegmatis (strain ATCC 700084 / mc(2)155) (Mycobacterium smegmatis) protein is Mycofactocin maturase MftC.